Reading from the N-terminus, the 728-residue chain is 1,4-alpha-glucan branching enzyme GlgB (728 aa).

Aspartate 405 serves as the catalytic Nucleophile. The active-site Proton donor is the glutamate 458.

It belongs to the glycosyl hydrolase 13 family. GlgB subfamily. In terms of assembly, monomer.

It carries out the reaction Transfers a segment of a (1-&gt;4)-alpha-D-glucan chain to a primary hydroxy group in a similar glucan chain.. It participates in glycan biosynthesis; glycogen biosynthesis. In terms of biological role, catalyzes the formation of the alpha-1,6-glucosidic linkages in glycogen by scission of a 1,4-alpha-linked oligosaccharide from growing alpha-1,4-glucan chains and the subsequent attachment of the oligosaccharide to the alpha-1,6 position. The sequence is that of 1,4-alpha-glucan branching enzyme GlgB from Shigella boydii serotype 4 (strain Sb227).